Here is a 353-residue protein sequence, read N- to C-terminus: Suppressor of RNA-mediated gene silencing (353 aa).

The protein belongs to the phytoreovirus non-structural protein 10 family.

In terms of biological role, suppressor of RNA-mediated gene silencing, also known as post-transcriptional gene silencing (PTGS), a mechanism of plant viral defense that limits the accumulation of viral RNAs. This is Suppressor of RNA-mediated gene silencing from Alopecurus aequalis (Barnyard grass).